The chain runs to 287 residues: MSPPTEGRAPGSRPIAGFAPAKINLTLHVTGQRGDGYHLLDSLVVFADIGDRLVLDPDAALGLTVSGPRAAGVPTGPENLILKAAAHLGAVRGAIHLEKHLPAAAGIGGGSSDAATALRLHAQAMGRALPDDGAALGADVPVCLRGKATRMSGIGEALTPVAGLPPLPAVLVNPGVDVPTPAVFRGLRQKENPPMPADLPGFATPTDCARWLATQRNDLEPPARAAAPVIDSVLAEIAGDPDCLLARMSGSGATCFGLFETPAQAQAAAETLSTRHPDWWVAPTVLR.

Lysine 22 is an active-site residue. Residue 102-112 (PAAAGIGGGSS) coordinates ATP. Residue aspartate 139 is part of the active site.

Belongs to the GHMP kinase family. IspE subfamily.

The catalysed reaction is 4-CDP-2-C-methyl-D-erythritol + ATP = 4-CDP-2-C-methyl-D-erythritol 2-phosphate + ADP + H(+). It participates in isoprenoid biosynthesis; isopentenyl diphosphate biosynthesis via DXP pathway; isopentenyl diphosphate from 1-deoxy-D-xylulose 5-phosphate: step 3/6. In terms of biological role, catalyzes the phosphorylation of the position 2 hydroxy group of 4-diphosphocytidyl-2C-methyl-D-erythritol. This Dinoroseobacter shibae (strain DSM 16493 / NCIMB 14021 / DFL 12) protein is 4-diphosphocytidyl-2-C-methyl-D-erythritol kinase.